We begin with the raw amino-acid sequence, 503 residues long: MSIKAEEISALIKQQLEKYDDKLNVNEVGTVTYVGDGIARAHGLNNVLSSELLQFSNGSYGIAQNLEANDVGIIILGRFDDIREGDQVKRTGRIMEVPVGDQLIGRVVNPLGQPVDGLGEIKTDKTRPIESKAPGVMDRQSVNQPLQTGIKAIDALVPIGRGQRELIIGDRKTGKTALALDTIINQKGQDVICIYVAIGQKESTVKNSVETLKRFGAMDYTIVVEAGPSEPAPMLYIAPYAGTAMGEEFMYNGKDVLIVFDDLSKQAVAYREISLLLRRPPGREAYPGDVFYLHSRLLERSAKLNKKLGGGSMTALPFIQTQAGDISAYIPTNVISITDGQIFLEADLFFAGTRPAINAGESVSRVGGSAQIKAMKKVAGTLRVDLASYRELESFAQFGSDLDQATQAKLNRGRRTVEVLKQPLHKPLPVEDEVLILYALTHGFLDAIPVPDIQRYELELYDYFASNYNDLLDVIRTTGDLPEEDKLNEALKNFNEGFSISKK.

Position 169-176 (169-176 (GDRKTGKT)) interacts with ATP.

The protein belongs to the ATPase alpha/beta chains family. In terms of assembly, F-type ATPases have 2 components, CF(1) - the catalytic core - and CF(0) - the membrane proton channel. CF(1) has five subunits: alpha(3), beta(3), gamma(1), delta(1), epsilon(1). CF(0) has three main subunits: a(1), b(2) and c(9-12). The alpha and beta chains form an alternating ring which encloses part of the gamma chain. CF(1) is attached to CF(0) by a central stalk formed by the gamma and epsilon chains, while a peripheral stalk is formed by the delta and b chains.

Its subcellular location is the cell membrane. The enzyme catalyses ATP + H2O + 4 H(+)(in) = ADP + phosphate + 5 H(+)(out). In terms of biological role, produces ATP from ADP in the presence of a proton gradient across the membrane. The alpha chain is a regulatory subunit. The polypeptide is ATP synthase subunit alpha (Lactobacillus johnsonii (strain CNCM I-12250 / La1 / NCC 533)).